The primary structure comprises 137 residues: MISVDVPGHPGDAGGGGGGARKVADAVPDVAQRQKVLHGRDALAGEACAVVDALDRAKGEPVSGHSSVVWWINSQGYHGGRPGFEPRIRPSAVIHAVTARVSNPGVRRQTTGERSFWLPSRRGGCCASFFGHWPRAA.

Residues 1–10 show a composition bias toward low complexity; the sequence is MISVDVPGHP. Residues 1-23 are disordered; sequence MISVDVPGHPGDAGGGGGGARKV. Residues 11 to 20 are compositionally biased toward gly residues; that stretch reads GDAGGGGGGA.

This is an uncharacterized protein from Human adenovirus C serotype 2 (HAdV-2).